The primary structure comprises 371 residues: MSIAKIAGVVLGSAALVAGHGYVSGAVVDGQYYSGYDMSYHYMSDPPKVIGWSTDATDLGFVDGSSYADADIICHKNAKNGAISAEIAAGKQVELQWTDWPESHKGPVITYLANCNGDCATVDKTQLEFFKIDEKGLISGSDNTWASDNLISSNNSWTVTIPSSIAAGNYVMRHEIIALHSAGNKDGAQNYPQCLNFKVTGGGSDKPEGTLGTALYKDTDPGILVNIYQTLSSYTIPGPALYSGSSSGSSSGSSGSSSAAPSATASASASATAAPVQTSTATAYQTSTAVASVTVTGSSPAQTHVQATSSSAAASTPTASSGASSGSGSSSSSSDLTDYFNSLSADELLNVIKQTLSWLVTDKIHARDISA.

An N-terminal signal peptide occupies residues 1 to 25 (MSIAKIAGVVLGSAALVAGHGYVSG). Positions 20 and 104 each coordinate Cu(2+). Disulfide bonds link C74–C194 and C115–C119. N-linked (GlcNAc...) asparagine glycosylation occurs at N154. H180 and Q189 together coordinate O2. Y191 is a Cu(2+) binding site. A disordered region spans residues 304–332 (HVQATSSSAAASTPTASSGASSGSGSSSS). A compositionally biased stretch (low complexity) spans 307–332 (ATSSSAAASTPTASSGASSGSGSSSS).

Belongs to the polysaccharide monooxygenase AA9 family. It depends on Cu(2+) as a cofactor.

The protein localises to the secreted. It carries out the reaction [(1-&gt;4)-beta-D-glucosyl]n+m + reduced acceptor + O2 = 4-dehydro-beta-D-glucosyl-[(1-&gt;4)-beta-D-glucosyl]n-1 + [(1-&gt;4)-beta-D-glucosyl]m + acceptor + H2O.. Its function is as follows. Lytic polysaccharide monooxygenase (LPMO) that depolymerizes crystalline and amorphous polysaccharides via the oxidation of scissile alpha- or beta-(1-4)-glycosidic bonds, yielding C1 and C4 oxidation products. Catalysis by LPMOs requires the reduction of the active-site copper from Cu(II) to Cu(I) by a reducing agent and H(2)O(2) or O(2) as a cosubstrate. In addition to cellulose, also cleaves the beta-(1!4)-glucan backbone of tamarind xyloglucan, irrespective of substitutions which contrasts with AA9A xyloglucan cleavage activity. The sequence is that of AA9 family lytic polysaccharide monooxygenase B from Aspergillus tamarii.